The sequence spans 685 residues: Probable serine/threonine-protein kinase CPE1738 (685 aa).

The region spanning 10-275 is the Protein kinase domain; sequence YELLQCVGEG…LEKIKKDPNV (266 aa). Residues 16–24 and K39 contribute to the ATP site; that span reads VGEGGMSFV. E143 functions as the Proton acceptor in the catalytic mechanism. The interval 277 to 339 is disordered; the sequence is ISSKSAEDED…NIQTKPQKAI (63 aa). Acidic residues predominate over residues 306-329; sequence EPDEDDEDDDEYYEDDEDEDEEEN. 4 consecutive PASTA domains span residues 376–440, 441–508, 513–581, and 589–648; these read GKDV…TVSG, GEGQ…TISK, KSET…TINY, and EKPK…TMEE. Residues 480 to 500 form a disordered region; sequence VPRGEVISQSPNANESVDKGS. A disordered region spans residues 623–685; the sequence is DTAKVKSVSN…PKQPEQSGNN (63 aa). Composition is skewed to low complexity over residues 627–645 and 654–685; these read VKSV…VSVT and QPTQ…SGNN.

The protein belongs to the protein kinase superfamily. Ser/Thr protein kinase family.

The enzyme catalyses L-seryl-[protein] + ATP = O-phospho-L-seryl-[protein] + ADP + H(+). It catalyses the reaction L-threonyl-[protein] + ATP = O-phospho-L-threonyl-[protein] + ADP + H(+). The sequence is that of Probable serine/threonine-protein kinase CPE1738 from Clostridium perfringens (strain 13 / Type A).